The primary structure comprises 361 residues: Alcohol dehydrogenase 9 (361 aa).

Zn(2+)-binding residues include cysteine 51, threonine 53, histidine 73, cysteine 104, cysteine 107, cysteine 110, cysteine 118, and cysteine 167. Residues threonine 53 and histidine 73 each coordinate an alcohol. Threonine 53 serves as a coordination point for NAD(+). Residues glycine 192 to glycine 197, lysine 221, leucine 278 to alanine 280, and lysine 356 contribute to the NAD(+) site.

This sequence belongs to the zinc-containing alcohol dehydrogenase family. Class-III subfamily. As to quaternary structure, homodimer. It depends on Zn(2+) as a cofactor.

The polypeptide is Alcohol dehydrogenase 9 (Catharanthus roseus (Madagascar periwinkle)).